A 188-amino-acid chain; its full sequence is Elongation factor P (188 aa).

It belongs to the elongation factor P family.

It localises to the cytoplasm. Its pathway is protein biosynthesis; polypeptide chain elongation. Its function is as follows. Involved in peptide bond synthesis. Stimulates efficient translation and peptide-bond synthesis on native or reconstituted 70S ribosomes in vitro. Probably functions indirectly by altering the affinity of the ribosome for aminoacyl-tRNA, thus increasing their reactivity as acceptors for peptidyl transferase. The polypeptide is Elongation factor P (Streptomyces coelicolor (strain ATCC BAA-471 / A3(2) / M145)).